Consider the following 98-residue polypeptide: NADH-ubiquinone oxidoreductase chain 4L (98 aa).

Helical transmembrane passes span 1 to 21 (MTMV…GLLM), 29 to 49 (SLLC…VTIL), and 61 to 81 (IILL…LVMV).

The protein belongs to the complex I subunit 4L family. As to quaternary structure, core subunit of respiratory chain NADH dehydrogenase (Complex I) which is composed of 45 different subunits.

It localises to the mitochondrion inner membrane. It carries out the reaction a ubiquinone + NADH + 5 H(+)(in) = a ubiquinol + NAD(+) + 4 H(+)(out). In terms of biological role, core subunit of the mitochondrial membrane respiratory chain NADH dehydrogenase (Complex I) which catalyzes electron transfer from NADH through the respiratory chain, using ubiquinone as an electron acceptor. Part of the enzyme membrane arm which is embedded in the lipid bilayer and involved in proton translocation. The chain is NADH-ubiquinone oxidoreductase chain 4L (MT-ND4L) from Leptonychotes weddellii (Weddell seal).